A 221-amino-acid polypeptide reads, in one-letter code: Translation initiation factor 6 (221 aa).

Belongs to the eIF-6 family.

In terms of biological role, binds to the 50S ribosomal subunit and prevents its association with the 30S ribosomal subunit to form the 70S initiation complex. The sequence is that of Translation initiation factor 6 from Methanospirillum hungatei JF-1 (strain ATCC 27890 / DSM 864 / NBRC 100397 / JF-1).